We begin with the raw amino-acid sequence, 247 residues long: Phycocyanobilin:ferredoxin oxidoreductase (247 aa).

Belongs to the HY2 family.

It catalyses the reaction (2R,3Z)-phycocyanobilin + 4 oxidized [2Fe-2S]-[ferredoxin] = biliverdin IXalpha + 4 reduced [2Fe-2S]-[ferredoxin] + 4 H(+). In terms of biological role, catalyzes the four-electron reduction of biliverdin IX-alpha (2-electron reduction at both the A and D rings); the reaction proceeds via an isolatable 2-electron intermediate, 181,182-dihydrobiliverdin. The polypeptide is Phycocyanobilin:ferredoxin oxidoreductase (pcyA) (Prochlorococcus marinus (strain SARG / CCMP1375 / SS120)).